Consider the following 221-residue polypeptide: Cytidylate kinase (221 aa).

11-19 contacts ATP; that stretch reads GPTASGKGT.

The protein belongs to the cytidylate kinase family. Type 1 subfamily.

It is found in the cytoplasm. It catalyses the reaction CMP + ATP = CDP + ADP. It carries out the reaction dCMP + ATP = dCDP + ADP. This chain is Cytidylate kinase, found in Cupriavidus pinatubonensis (strain JMP 134 / LMG 1197) (Cupriavidus necator (strain JMP 134)).